A 280-amino-acid polypeptide reads, in one-letter code: 4-deoxy-L-threo-5-hexosulose-uronate ketol-isomerase 1 (280 aa).

Residues H198, H200, E205, and H247 each coordinate Zn(2+).

The protein belongs to the KduI family. Requires Zn(2+) as cofactor.

It carries out the reaction 5-dehydro-4-deoxy-D-glucuronate = 3-deoxy-D-glycero-2,5-hexodiulosonate. The protein operates within glycan metabolism; pectin degradation; 2-dehydro-3-deoxy-D-gluconate from pectin: step 4/5. In terms of biological role, catalyzes the isomerization of 5-dehydro-4-deoxy-D-glucuronate to 3-deoxy-D-glycero-2,5-hexodiulosonate. This Rhizobium meliloti (strain 1021) (Ensifer meliloti) protein is 4-deoxy-L-threo-5-hexosulose-uronate ketol-isomerase 1 (kduI1).